A 53-amino-acid polypeptide reads, in one-letter code: Membrane antigen containing repeating peptides (53 aa).

Tandem repeats lie at residues 1–10 (EAEEAARLQA), 11–20 (EAEEAARQQA), 21–30 (EAEEAARLQA), 31–40 (EAEEAARLQA), 41–50 (EAEEAARLQA), and 51–53 (EAE). Residues 1–53 (EAEEAARLQAEAEEAARQQAEAEEAARLQAEAEEAARLQAEAEEAARLQAEAE) are 6 X 10 AA tandem repeats. The disordered stretch occupies residues 1–53 (EAEEAARLQAEAEEAARQQAEAEEAARLQAEAEEAARLQAEAEEAARLQAEAE).

It localises to the membrane. In Leishmania major, this protein is Membrane antigen containing repeating peptides.